A 138-amino-acid polypeptide reads, in one-letter code: Putative pre-16S rRNA nuclease (138 aa).

The protein belongs to the YqgF nuclease family.

It is found in the cytoplasm. Its function is as follows. Could be a nuclease involved in processing of the 5'-end of pre-16S rRNA. This is Putative pre-16S rRNA nuclease (yrrK) from Bacillus subtilis (strain 168).